A 352-amino-acid chain; its full sequence is Protein MGF 360-9L (352 aa).

This sequence belongs to the asfivirus MGF 360 family. As to quaternary structure, interacts with host STAT1; this interaction mediates STAT1 degradation through apoptosis. Interacts with host STAT2; this interaction mediates STAT2 degradation through the proteasome.

The protein localises to the host cytoplasm. Functionally, plays a role in virus cell tropism, and may be required for efficient virus replication in macrophages. The chain is Protein MGF 360-9L from Ornithodoros (relapsing fever ticks).